Here is a 123-residue protein sequence, read N- to C-terminus: Large ribosomal subunit protein bL17 (123 aa).

It belongs to the bacterial ribosomal protein bL17 family. Part of the 50S ribosomal subunit. Contacts protein L32.

This is Large ribosomal subunit protein bL17 from Mycoplasma genitalium (strain ATCC 33530 / DSM 19775 / NCTC 10195 / G37) (Mycoplasmoides genitalium).